Consider the following 162-residue polypeptide: MMLPSYLHFAIRKKVLAIFIVLLIISAYLGFAPALPVPINDKVCHFFVFFLLTLVFYWVFDLSRRRATQLTILVCGVFGGLGSEFVQSFLTYRTFDLFDIVANLLGCSLALLLNILYHKRRLEKIRLQRYGHVPTIADDLEMQASAAEEEEEGEEDVSKSTP.

4 helical membrane-spanning segments follow: residues 15-35 (VLAI…APAL), 43-63 (VCHF…FDLS), 70-90 (LTIL…QSFL), and 97-117 (LFDI…NILY).

Its subcellular location is the membrane. This is an uncharacterized protein from Schizosaccharomyces pombe (strain 972 / ATCC 24843) (Fission yeast).